The following is a 1257-amino-acid chain: Period circadian protein homolog 2 (1257 aa).

A disordered region spans residues 1-59; that stretch reads MNGYVDFSPSPTSPTQEPGEPQPTQAVLQEDVDMSSGSSGNENCSTGRDSQGSDCDDSG. Residues 8–25 are compositionally biased toward low complexity; that stretch reads SPSPTSPTQEPGEPQPTQ. Over residues 35-53 the composition is skewed to polar residues; that stretch reads SSGSSGNENCSTGRDSQGS. A Nuclear export signal 1 motif is present at residues 109-118; sequence LIRTLRELKV. A PAS 1 domain is found at 179 to 246; it reads ITSEYIVKNS…FHSYTTPYKL (68 aa). The LXXLL signature appears at 306–310; the sequence is LCCLL. The PAS 2 domain occupies 319-385; it reads YEAPRIPPEK…MLAIHKKILQ (67 aa). Residues 393–436 enclose the PAC domain; that stretch reads YSPIRFRTRNGEYITLDTSWSSFINPWSRKISFIIGRHKVRVGP. The Nuclear export signal 2 signature appears at 460-469; it reads LTEQIHRLLM. A disordered region spans residues 471–567; sequence PVPHSGSSGY…RDSSGASLPK (97 aa). Positions 478-482 are important for protein stability; it reads SGYGS. Polar residues-rich tracts occupy residues 493–504 and 518–528; these read MSQTSSSDSNGQ and SGKSQSKSHFS. Positions 510-709 are CSNK1E binding domain; sequence RRSGIFKTSG…DAAGGLSQEK (200 aa). 5 positions are modified to phosphoserine: Ser525, Ser528, Ser531, Ser538, and Ser544. The segment covering 541–555 has biased composition (polar residues); it reads EMQSSPPAQVRSVTT. Phosphothreonine is present on Thr554. Ser659, Ser693, Ser697, Ser706, Ser758, and Ser763 each carry phosphoserine. Disordered stretches follow at residues 678–706 and 757–833; these read DKKPQPELETVEDVASGPESQDDAAGGLS and RSRA…CPSA. Positions 778 to 794 match the Nuclear localization signal motif; that stretch reads KKTGKNRKLKSKRVKTR. Residues 779–792 are compositionally biased toward basic residues; the sequence is KTGKNRKLKSKRVK. The segment covering 821-832 has biased composition (low complexity); that stretch reads SPSDTSQSSCPS. Thr858 carries the phosphothreonine modification. The segment at 882 to 1067 is interaction with PPARG; it reads EFAVQPLPFA…DLCSATGSAL (186 aa). Ser939 carries the post-translational modification Phosphoserine. Thr964 is modified (phosphothreonine). At Ser971 the chain carries Phosphoserine. Positions 983 to 990 match the Nuclear export signal 3 motif; sequence LQLNLLQL. The tract at residues 993–1044 is disordered; sequence APESSTGAAGTLGTTGTAASGLDCTSGASRDRQPKAPPTCSEPSDTQNSDAI. The span at 996-1014 shows a compositional bias: low complexity; that stretch reads SSTGAAGTLGTTGTAASGL. Positions 1033–1044 are enriched in polar residues; the sequence is SEPSDTQNSDAI. The short motif at 1051–1055 is the LXXLL element; that stretch reads LNLLL. Low complexity predominate over residues 1070-1089; that stretch reads SGASATSDSLGSSSLGCDTS. The interval 1070–1108 is disordered; the sequence is SGASATSDSLGSSSLGCDTSRSGAGSSDTSHTSKYFGSI. A compositionally biased stretch (polar residues) spans 1090 to 1108; sequence RSGAGSSDTSHTSKYFGSI. Ser1126 carries the post-translational modification Phosphoserine. Residues 1157–1257 are CRY binding domain; the sequence is SRDLQAVLKE…LANPRKEAQT (101 aa). Positions 1226–1257 are disordered; that stretch reads EEDSPSLGLCDTSEAKEEESGQLANPRKEAQT.

As to quaternary structure, homodimer. Component of the circadian core oscillator, which includes the CRY proteins, CLOCK or NPAS2, BMAL1 or BMAL2, CSNK1D and/or CSNK1E, TIMELESS, and the PER proteins. Interacts with CLOCK-BMAL1 (off DNA). Interacts directly with PER1 and PER3, and through a C-terminal domain, with CRY1 and CRY2. Interacts (via PAS 2 domain) with TIMELESS. Interacts with NFIL3. Different large complexes have been identified with different repressive functions. The core of PER complexes is composed of at least PER1, PER2, PER3, CRY1, CRY2, CSNK1D and/or CSNK1E. The large PER complex involved in the repression of transcriptional termination is composed of at least PER2, CDK9, DDX5, DHX9, NCBP1 and POLR2A (active). The large PER complex involved in the histone deacetylation is composed of at least HDAC1, PER2, SFPQ and SIN3A. The large PER complex involved in the histone methylation is composed of at least PER2, CBX3, TRIM28, SUV39H1 and/or SUV39H2; CBX3 mediates the formation of the complex. Interacts with SETX; the interaction inhibits termination of circadian target genes. Interacts with the nuclear receptors HNF4A, NR1D1, NR4A2, RORA, PPARA, PPARG and THRA; the interaction with at least PPARG is ligand dependent. Interacts with PML. Interacts (phosphorylated) with BTRC and FBXW11; the interactions trigger proteasomal degradation. Interacts with NONO and SFPQ. Interacts with CAVIN3. Interacts with MAGEL2. Interacts with MAP1LC3B. Interacts with HNF4A. Acetylated. Deacetylated by SIRT1, resulting in decreased protein stability. Deacetylated by SIRT6, preventing its degradation by the proteasome, resulting in increased protein stability. Post-translationally, phosphorylated by CSNK1E and CSNK1D. Phosphorylation results in PER2 protein degradation. May be dephosphorylated by PP1. In terms of processing, ubiquitinated, leading to its proteasomal degradation. Ubiquitination may be inhibited by CRY1. In terms of tissue distribution, expressed in all tissues examined including eye, brain, heart, lung, spleen, liver, pancreas and kidney. In the CNS, highly expressed in the SCN, internal granular layer of granular cells of the olfactory bulb, tuberculum olfactorium, piriform cortex, gyrus dentatus of the hippocampus, cerebellum, pars tuberalis/median eminence, and pituitary, and moderately in the tenia tecta, caudate putamen, accumbens nucleus, superior and inferior colliculus and pineal gland.

It localises to the nucleus. It is found in the cytoplasm. Its subcellular location is the perinuclear region. Transcriptional repressor which forms a core component of the circadian clock. The circadian clock, an internal time-keeping system, regulates various physiological processes through the generation of approximately 24 hour circadian rhythms in gene expression, which are translated into rhythms in metabolism and behavior. It is derived from the Latin roots 'circa' (about) and 'diem' (day) and acts as an important regulator of a wide array of physiological functions including metabolism, sleep, body temperature, blood pressure, endocrine, immune, cardiovascular, and renal function. Consists of two major components: the central clock, residing in the suprachiasmatic nucleus (SCN) of the brain, and the peripheral clocks that are present in nearly every tissue and organ system. Both the central and peripheral clocks can be reset by environmental cues, also known as Zeitgebers (German for 'timegivers'). The predominant Zeitgeber for the central clock is light, which is sensed by retina and signals directly to the SCN. The central clock entrains the peripheral clocks through neuronal and hormonal signals, body temperature and feeding-related cues, aligning all clocks with the external light/dark cycle. Circadian rhythms allow an organism to achieve temporal homeostasis with its environment at the molecular level by regulating gene expression to create a peak of protein expression once every 24 hours to control when a particular physiological process is most active with respect to the solar day. Transcription and translation of core clock components (CLOCK, NPAS2, BMAL1, BMAL2, PER1, PER2, PER3, CRY1 and CRY2) plays a critical role in rhythm generation, whereas delays imposed by post-translational modifications (PTMs) are important for determining the period (tau) of the rhythms (tau refers to the period of a rhythm and is the length, in time, of one complete cycle). A diurnal rhythm is synchronized with the day/night cycle, while the ultradian and infradian rhythms have a period shorter and longer than 24 hours, respectively. Disruptions in the circadian rhythms contribute to the pathology of cardiovascular diseases, cancer, metabolic syndrome and aging. A transcription/translation feedback loop (TTFL) forms the core of the molecular circadian clock mechanism. Transcription factors, CLOCK or NPAS2 and BMAL1 or BMAL2, form the positive limb of the feedback loop, act in the form of a heterodimer and activate the transcription of core clock genes and clock-controlled genes (involved in key metabolic processes), harboring E-box elements (5'-CACGTG-3') within their promoters. The core clock genes: PER1/2/3 and CRY1/2 which are transcriptional repressors form the negative limb of the feedback loop and interact with the CLOCK|NPAS2-BMAL1|BMAL2 heterodimer inhibiting its activity and thereby negatively regulating their own expression. This heterodimer also activates nuclear receptors NR1D1/2 and RORA/B/G, which form a second feedback loop and which activate and repress BMAL1 transcription, respectively. PER1 and PER2 proteins transport CRY1 and CRY2 into the nucleus with appropriate circadian timing, but also contribute directly to repression of clock-controlled target genes through interaction with several classes of RNA-binding proteins, helicases and others transcriptional repressors. PER appears to regulate circadian control of transcription by at least three different modes. First, interacts directly with the CLOCK-BMAL1 at the tail end of the nascent transcript peak to recruit complexes containing the SIN3-HDAC that remodel chromatin to repress transcription. Second, brings H3K9 methyltransferases such as SUV39H1 and SUV39H2 to the E-box elements of the circadian target genes, like PER2 itself or PER1. The recruitment of each repressive modifier to the DNA seems to be very precisely temporally orchestrated by the large PER complex, the deacetylases acting before than the methyltransferases. Additionally, large PER complexes are also recruited to the target genes 3' termination site through interactions with RNA-binding proteins and helicases that may play a role in transcription termination to regulate transcription independently of CLOCK-BMAL1 interactions. Recruitment of large PER complexes to the elongating polymerase at PER and CRY termination sites inhibited SETX action, impeding RNA polymerase II release and thereby repressing transcriptional reinitiation. May propagate clock information to metabolic pathways via the interaction with nuclear receptors. Coactivator of PPARA and corepressor of NR1D1, binds rhythmically at the promoter of nuclear receptors target genes like BMAL1 or G6PC1. Directly and specifically represses PPARG proadipogenic activity by blocking PPARG recruitment to target promoters and thereby transcriptional activation. Required for fatty acid and lipid metabolism, is involved as well in the regulation of circulating insulin levels. Plays an important role in the maintenance of cardiovascular functions through the regulation of NO and vasodilatatory prostaglandins production in aortas. Controls circadian glutamate uptake in synaptic vesicles through the regulation of VGLUT1 expression. May also be involved in the regulation of inflammatory processes. Represses the CLOCK-BMAL1 induced transcription of BHLHE40/DEC1 and ATF4. Negatively regulates the formation of the TIMELESS-CRY1 complex by competing with TIMELESS for binding to CRY1. The sequence is that of Period circadian protein homolog 2 from Rattus norvegicus (Rat).